A 467-amino-acid polypeptide reads, in one-letter code: MSYSSFSIAQGSRVPSLSGTRSSSSYSLKSDLIPQSRRSHSVYGTPGSIRISSPSMPSAIVSSYSSTLSSALPSSSYGGNSYSSSTSFSSGGTDFLLGTSGKEAMQNLNDRLADYLARVRSLEDRNRELEQKIREWYEKQGAGTKRKDFSHYFKIIADLQNQINAGNMENARILLKIDNAKLAADDFKQKWEAEQALRLGVEADIHGLRKILDEMTLARTDLEMQIEGHKEEKAYLIKSHDEDMKALRSQLGGQVNVEVDAAPAEDLTKKLEIIRQRYEQLAEKNRKESEDWFIKKSEELNKNMASSTEALQTSKTEINELRRTIQGLEIELQSQQSMKGALEGQLADTEHRYSSTLMNLQNIINQKEAELSNIRADIESQASKYKILLDVKTRLENEISTYRTLLEGDAGRSHSSSHLSSTVSKDKVPVSSPNVITKVRTIVEEKINGQVISKKEYEGSPDQLSYY.

A head region spans residues 1–100 (MSYSSFSIAQ…GGTDFLLGTS (100 aa)). Residues 12–30 (SRVPSLSGTRSSSSYSLKS) show a composition bias toward low complexity. A disordered region spans residues 12–32 (SRVPSLSGTRSSSSYSLKSDL). The tract at residues 101 to 137 (GKEAMQNLNDRLADYLARVRSLEDRNRELEQKIREWY) is coil 1A. An IF rod domain is found at 101-413 (GKEAMQNLND…TLLEGDAGRS (313 aa)). The linker 1 stretch occupies residues 138-156 (EKQGAGTKRKDFSHYFKII). Residues 157-248 (ADLQNQINAG…SHDEDMKALR (92 aa)) are coil 1B. Residues 249-268 (SQLGGQVNVEVDAAPAEDLT) form a linker 12 region. Residues 269-416 (KKLEIIRQRY…EGDAGRSHSS (148 aa)) form a coil 2 region. Residues 409 to 430 (DAGRSHSSSHLSSTVSKDKVPV) form a disordered region. The tail stretch occupies residues 417–463 (SHLSSTVSKDKVPVSSPNVITKVRTIVEEKINGQVISKKEYEGSPDQ).

Belongs to the intermediate filament family. In terms of assembly, heterotetramer of two type I and two type II keratins. As to expression, expressed in the outermost cell layers of skin epidermis (at protein level).

This chain is Keratin, type 1 cytoskeletal 11, found in Protopterus aethiopicus (Marbled lungfish).